We begin with the raw amino-acid sequence, 423 residues long: UPF0229 protein Pput_0430 (423 aa).

The tract at residues 81 to 108 is disordered; the sequence is EFTAGEHIPRPQGGGGGGGRGKAGNSGE. A compositionally biased stretch (gly residues) spans 92–107; the sequence is QGGGGGGGRGKAGNSG.

The protein belongs to the UPF0229 family.

The sequence is that of UPF0229 protein Pput_0430 from Pseudomonas putida (strain ATCC 700007 / DSM 6899 / JCM 31910 / BCRC 17059 / LMG 24140 / F1).